A 397-amino-acid chain; its full sequence is CCA-adding enzyme (397 aa).

ATP is bound by residues G26 and R29. Residues G26 and R29 each contribute to the CTP site. D39 and D41 together coordinate Mg(2+). ATP-binding residues include R110, D153, R156, R159, and R162. Residues R110, D153, R156, R159, and R162 each contribute to the CTP site.

It belongs to the tRNA nucleotidyltransferase/poly(A) polymerase family. Bacterial CCA-adding enzyme type 3 subfamily. As to quaternary structure, homodimer. Mg(2+) serves as cofactor.

It carries out the reaction a tRNA precursor + 2 CTP + ATP = a tRNA with a 3' CCA end + 3 diphosphate. The enzyme catalyses a tRNA with a 3' CCA end + 2 CTP + ATP = a tRNA with a 3' CCACCA end + 3 diphosphate. In terms of biological role, catalyzes the addition and repair of the essential 3'-terminal CCA sequence in tRNAs without using a nucleic acid template. Adds these three nucleotides in the order of C, C, and A to the tRNA nucleotide-73, using CTP and ATP as substrates and producing inorganic pyrophosphate. tRNA 3'-terminal CCA addition is required both for tRNA processing and repair. Also involved in tRNA surveillance by mediating tandem CCA addition to generate a CCACCA at the 3' terminus of unstable tRNAs. While stable tRNAs receive only 3'-terminal CCA, unstable tRNAs are marked with CCACCA and rapidly degraded. This chain is CCA-adding enzyme, found in Bacillus cereus (strain B4264).